Consider the following 364-residue polypeptide: 3-isopropylmalate dehydrogenase (364 aa).

78-91 provides a ligand contact to NAD(+); that stretch reads GKKWDNFPIEERPE. Substrate-binding residues include arginine 99, arginine 109, arginine 138, and aspartate 228. Residues aspartate 228, aspartate 252, and aspartate 256 each coordinate Mg(2+). 286 to 298 serves as a coordination point for NAD(+); it reads GSAPDIAGKNIAN.

It belongs to the isocitrate and isopropylmalate dehydrogenases family. LeuB type 1 subfamily. Homodimer. The cofactor is Mg(2+). Mn(2+) serves as cofactor.

Its subcellular location is the cytoplasm. It carries out the reaction (2R,3S)-3-isopropylmalate + NAD(+) = 4-methyl-2-oxopentanoate + CO2 + NADH. It participates in amino-acid biosynthesis; L-leucine biosynthesis; L-leucine from 3-methyl-2-oxobutanoate: step 3/4. In terms of biological role, catalyzes the oxidation of 3-carboxy-2-hydroxy-4-methylpentanoate (3-isopropylmalate) to 3-carboxy-4-methyl-2-oxopentanoate. The product decarboxylates to 4-methyl-2 oxopentanoate. The polypeptide is 3-isopropylmalate dehydrogenase (Buchnera aphidicola subsp. Uroleucon obscurum).